The sequence spans 710 residues: MSAQGDCEFLVQRARELVPQDLWAAKAWLITARSLYPADFNIQYEMYTIERNAERTATAGRLLYDMFVNFPDQPVVWREISIITSALRNDSQDKQTQFLRSLFETLPGRVQCEMLLKVTEQCFNTLERSEMLLLLLRRFPETVVQHGVGLGEALLEAETIEEQESPVNCFRKLFVCDVLPLIINNHDVRLPANLLYKYLNKAAEFYINYVTRSTQIENQHQGAQDTSDLMSPSKRSSQKYIIEGLTEKSSQIVDPWERLFKILNVVGMRCEWQMDKGRRSYGDILHRMKDLCRYMNNFDSEAHAKYKNQVVYSTMLVFFKNAFQYVNSIQPSLFQGPNAPSQVPLVLLEDVSNVYGDVEIDRNKHIHKKRKLAEGREKTMSSDDEDCSAKGRNRHIVVNKAELANSTEVLESFKLARESWELLYSLEFLDKEFTRICLAWKTDTWLWLRIFLTDMIIYQGQYKKAIASLHHLAALQGSISQPQITGQGTLEHQRALIQLATCHFALGEYRMTCEKVLDLMCYMVLPIQDGGKSQEEPSKVKPKFRKGSDLKLLPCTSKAIMPYCLHLMLACFKLRAFTDNRDDMALGHVIVLLQQEWPRGENLFLKAVNKICQQGNFQYENFFNYVTNIDMLEEFAYLRTQEGGKIHLELLPNQGMLIKHHTVTRGITKGVKEDFRLAMERQVSRCGENLMVVLHRFCINEKILLLQTLT.

Residues Ser-231, Ser-381, and Ser-382 each carry the phosphoserine modification. Residue Lys-464 forms a Glycyl lysine isopeptide (Lys-Gly) (interchain with G-Cter in SUMO2) linkage.

This sequence belongs to the Integrator subunit 10 family. As to quaternary structure, component of the Integrator complex, composed of core subunits INTS1, INTS2, INTS3, INTS4, INTS5, INTS6, INTS7, INTS8, INTS9/RC74, INTS10, INTS11/CPSF3L, INTS12, INTS13, INTS14 and INTS15. The core complex associates with protein phosphatase 2A subunits PPP2CA and PPP2R1A, to form the Integrator-PP2A (INTAC) complex. INTS10 is part of the tail subcomplex, composed of INTS10, INTS13, INTS14 and INTS15.

The protein localises to the nucleus. In terms of biological role, component of the integrator complex, a multiprotein complex that terminates RNA polymerase II (Pol II) transcription in the promoter-proximal region of genes. The integrator complex provides a quality checkpoint during transcription elongation by driving premature transcription termination of transcripts that are unfavorably configured for transcriptional elongation: the complex terminates transcription by (1) catalyzing dephosphorylation of the C-terminal domain (CTD) of Pol II subunit POLR2A/RPB1 and SUPT5H/SPT5, (2) degrading the exiting nascent RNA transcript via endonuclease activity and (3) promoting the release of Pol II from bound DNA. The integrator complex is also involved in terminating the synthesis of non-coding Pol II transcripts, such as enhancer RNAs (eRNAs), small nuclear RNAs (snRNAs), telomerase RNAs and long non-coding RNAs (lncRNAs). Within the integrator complex, INTS10 is part of the integrator tail module that acts as a platform for the recruitment of transcription factors at promoters. May be not involved in the recruitment of cytoplasmic dynein to the nuclear envelope, probably as component of the integrator complex. The sequence is that of Integrator complex subunit 10 from Homo sapiens (Human).